A 346-amino-acid polypeptide reads, in one-letter code: UDP-3-O-acylglucosamine N-acyltransferase (346 aa).

The active-site Proton acceptor is histidine 240.

Belongs to the transferase hexapeptide repeat family. LpxD subfamily. In terms of assembly, homotrimer.

The enzyme catalyses a UDP-3-O-[(3R)-3-hydroxyacyl]-alpha-D-glucosamine + a (3R)-hydroxyacyl-[ACP] = a UDP-2-N,3-O-bis[(3R)-3-hydroxyacyl]-alpha-D-glucosamine + holo-[ACP] + H(+). Its pathway is bacterial outer membrane biogenesis; LPS lipid A biosynthesis. Catalyzes the N-acylation of UDP-3-O-acylglucosamine using 3-hydroxyacyl-ACP as the acyl donor. Is involved in the biosynthesis of lipid A, a phosphorylated glycolipid that anchors the lipopolysaccharide to the outer membrane of the cell. The sequence is that of UDP-3-O-acylglucosamine N-acyltransferase from Phocaeicola vulgatus (strain ATCC 8482 / DSM 1447 / JCM 5826 / CCUG 4940 / NBRC 14291 / NCTC 11154) (Bacteroides vulgatus).